A 319-amino-acid polypeptide reads, in one-letter code: ADP-L-glycero-D-manno-heptose-6-epimerase (319 aa).

NADP(+)-binding positions include 10 to 11 (FI), 31 to 32 (DD), Lys-38, Lys-53, and 75 to 79 (EGACS). Residue Tyr-139 is the Proton acceptor of the active site. An NADP(+)-binding site is contributed by Lys-143. Residue Asn-168 coordinates substrate. NADP(+)-binding residues include Val-169 and Lys-177. Catalysis depends on Lys-177, which acts as the Proton acceptor. Substrate contacts are provided by residues Ser-179, His-186, 200 to 203 (FEGA), Arg-213, and Tyr-281.

It belongs to the NAD(P)-dependent epimerase/dehydratase family. HldD subfamily. Homopentamer. NADP(+) is required as a cofactor.

The catalysed reaction is ADP-D-glycero-beta-D-manno-heptose = ADP-L-glycero-beta-D-manno-heptose. It functions in the pathway nucleotide-sugar biosynthesis; ADP-L-glycero-beta-D-manno-heptose biosynthesis; ADP-L-glycero-beta-D-manno-heptose from D-glycero-beta-D-manno-heptose 7-phosphate: step 4/4. Catalyzes the interconversion between ADP-D-glycero-beta-D-manno-heptose and ADP-L-glycero-beta-D-manno-heptose via an epimerization at carbon 6 of the heptose. This is ADP-L-glycero-D-manno-heptose-6-epimerase from Aromatoleum aromaticum (strain DSM 19018 / LMG 30748 / EbN1) (Azoarcus sp. (strain EbN1)).